The chain runs to 1178 residues: Dual specificity mitogen-activated protein kinase kinase hemipterous (1178 aa).

Disordered regions lie at residues 74 to 103 (SGSG…SSSS) and 115 to 148 (ATGT…GGGL). Composition is skewed to low complexity over residues 91-103 (ATPF…SSSS) and 115-128 (ATGT…PPTT). A Protein kinase domain is found at 197-456 (LKHLGDLGNG…YPELLAQPFI (260 aa)). ATP-binding positions include 203 to 211 (LGNGTSGNV) and lysine 226. Aspartate 320 serves as the catalytic Proton acceptor. Serine 348 is subject to Phosphoserine. Residue threonine 352 is modified to Phosphothreonine. Residues 522 to 648 (TYAGQSPTNP…DESPKKESMF (127 aa)) form a disordered region. Positions 523–543 (YAGQSPTNPQKTIKPTQIPSY) are enriched in polar residues. The span at 544–570 (QQQQSQFFMQSATQLPQTTTTTPTATT) shows a compositional bias: low complexity. The segment covering 574–593 (GGSGNGNGRGNGSGGSGNGS) has biased composition (gly residues). Over residues 594-608 (GSSSSASPLSPPSAG) the composition is skewed to low complexity. Basic and acidic residues predominate over residues 636–646 (KYNDESPKKES). Phosphoserine occurs at positions 646 and 662. Disordered regions lie at residues 715-783 (TTTP…LQPG), 797-851 (QNQL…STCS), 912-933 (GTSP…GNGN), 999-1026 (TSPV…VVNN), 1042-1108 (SSSS…NRGQ), and 1122-1178 (GQPP…TIDQ). Over residues 724 to 734 (TENSQAYDSCD) the composition is skewed to polar residues. Low complexity-rich tracts occupy residues 735-783 (SSSN…LQPG), 808-817 (RYQQQRQQPP), and 837-851 (THST…STCS). Polar residues predominate over residues 912–928 (GTSPTLQSRSPEQQSDY). Over residues 1042–1055 (SSSSNTSQSTSPTT) the composition is skewed to low complexity. Phosphoserine is present on residues serine 1150 and serine 1154. The segment covering 1168–1178 (PQRRIYRTIDQ) has biased composition (basic and acidic residues).

Belongs to the protein kinase superfamily. STE Ser/Thr protein kinase family. MAP kinase kinase subfamily. MAPKK is itself dependent on Ser/Thr phosphorylation for activity catalyzed by MAP kinase kinase kinases. In terms of processing, weakly autophosphorylated.

It carries out the reaction L-seryl-[protein] + ATP = O-phospho-L-seryl-[protein] + ADP + H(+). The enzyme catalyses L-threonyl-[protein] + ATP = O-phospho-L-threonyl-[protein] + ADP + H(+). The catalysed reaction is L-tyrosyl-[protein] + ATP = O-phospho-L-tyrosyl-[protein] + ADP + H(+). In terms of biological role, required for the epithelial cell sheet movement called dorsal closure (DC), which allows establishment of the dorsal epidermis. Controls the expression in the dorsal epithelium edges of another dorsal closure gene, puckered (puc). Phosphorylates and activates the MAP kinase bsk; bsk signal transduction pathway mediates an immune response and morphogenesis. The polypeptide is Dual specificity mitogen-activated protein kinase kinase hemipterous (hep) (Drosophila melanogaster (Fruit fly)).